Reading from the N-terminus, the 353-residue chain is Histidinol-phosphate aminotransferase (353 aa).

Lys-211 is modified (N6-(pyridoxal phosphate)lysine).

This sequence belongs to the class-II pyridoxal-phosphate-dependent aminotransferase family. Histidinol-phosphate aminotransferase subfamily. As to quaternary structure, homodimer. Pyridoxal 5'-phosphate is required as a cofactor.

It carries out the reaction L-histidinol phosphate + 2-oxoglutarate = 3-(imidazol-4-yl)-2-oxopropyl phosphate + L-glutamate. It functions in the pathway amino-acid biosynthesis; L-histidine biosynthesis; L-histidine from 5-phospho-alpha-D-ribose 1-diphosphate: step 7/9. The chain is Histidinol-phosphate aminotransferase from Klebsiella pneumoniae subsp. pneumoniae (strain ATCC 700721 / MGH 78578).